The primary structure comprises 1033 residues: MKKVDVKESAVGREMRIRKQWNEQNIFEQSIQNREGAQSFVFYEGPPTANGLPHVGHALGRTIKDVVARYKTMAGYKVLRKAGWDTHGLPVELGVEKQLGISGKHEIEEYGIEPFIKKCKESVFTYEKQWREFTESIGYWVDMDDPYVTLENPYIESVWHILGTIHEKGLLYKGHRVSPYCPSCQTSLSSHEVAQGYKTVKDLSATVKFKVKDSENEYFLGWTTTPWTLPANVALAVHPNMEYVKAKQEGHVYIVAKERVQDVLKENYEVLSVHKGEELLNISYTAPFPMKEVTNGYRVIGADFVTADSGTGLVHIAPAYGEDDYRVVQSEGLSFLHVVDEKGEYTEAVPFLKGKFVKDCDVDIVRYLAKEDLLYHKEKYEHSYPHCWRCDSPLLYYAGESWLIRTTAIKDTFLQNNDTVTWYPDHMKHGRFGKFLENMVDWNISRNRYWGTPLNVWECERCDHQFAPKSIADLRKHSMKETPEDLELHKPYVDEVQVCCEKCGSTMNRTPEVIDVWFDSGSMPFAQYHYPFENKELFEEQFPADVIAEGIDQTRGWFYSLLAVSALYTGKVPYKRVLSLGHVLDEEGQKMSKSKGNALDPVDLVGKFGADALRWALLVDSALWNAKRFSERTVLEAKSKFVDTLVNVYSFYVLYANLDEYNPNETYDVKRTKLDEWVLSRLHSTTKKVRTALDDYQFTNAAREIAALVDEVSNWYVRRSRNRFWESGMNAEKAAAYETLHDVLVTISKLIAPFTPFVAEDVHLNLTGSSVHLEDYPVVNESLLQPKLEAEMDAVLQVVELGRSNRNQHSLKVKQPLAELVLLEHNENDMDWESYRDIVMDELNVKAFHVELDETKYTSYQLKLNFKKAGPKFGKNVNAVNGWLKQLSQDEVQNFVSTERAVYEVAPGEEIVVTTEDVLVEKVAKSGFSNTTNGQYTVMLDTNVTEELLQEGVAREFIRAVQEYRKQLNLPVNLRVDVILDTEEELQQTLTNHKELLEENLLVKQFTFGHLTNEDDELSLGETKVRIKLSTAQ.

The 'HIGH' region signature appears at 47 to 57 (PTANGLPHVGH). The 'KMSKS' region motif lies at 590–594 (KMSKS). An ATP-binding site is contributed by Lys593.

It belongs to the class-I aminoacyl-tRNA synthetase family. IleS type 2 subfamily. As to quaternary structure, monomer. It depends on Zn(2+) as a cofactor.

The protein localises to the cytoplasm. It catalyses the reaction tRNA(Ile) + L-isoleucine + ATP = L-isoleucyl-tRNA(Ile) + AMP + diphosphate. Its function is as follows. Catalyzes the attachment of isoleucine to tRNA(Ile). As IleRS can inadvertently accommodate and process structurally similar amino acids such as valine, to avoid such errors it has two additional distinct tRNA(Ile)-dependent editing activities. One activity is designated as 'pretransfer' editing and involves the hydrolysis of activated Val-AMP. The other activity is designated 'posttransfer' editing and involves deacylation of mischarged Val-tRNA(Ile). The polypeptide is Isoleucine--tRNA ligase 2 (Bacillus anthracis).